A 953-amino-acid polypeptide reads, in one-letter code: ABC transporter A family member 11 (953 aa).

6 helical membrane passes run 33-53 (CLQI…EEAM), 230-250 (GPVF…GALV), 277-297 (TWEG…GMIF), 307-327 (FVLV…LAFA), 341-361 (VGFL…TGFP), and 417-437 (VISI…WFVL). In terms of domain architecture, ABC transporter spans 519 to 764 (VQIHGLAKTY…FGTGFVATVS (246 aa)). An ATP-binding site is contributed by 565 to 572 (GPNGAGKT).

It belongs to the ABC transporter superfamily. ABCA family. CPR flippase (TC 3.A.1.211) subfamily.

The protein resides in the membrane. The polypeptide is ABC transporter A family member 11 (ABCA11) (Arabidopsis thaliana (Mouse-ear cress)).